The chain runs to 522 residues: BTB/POZ domain-containing protein 3 (522 aa).

The segment at 25–44 (RSKKSSKKANTSSSSSNSSK) is disordered. Residues 32 to 44 (KANTSSSSSNSSK) are compositionally biased toward low complexity. Positions 120-190 (ADVHFVVGPP…IYCDEIDLAA (71 aa)) constitute a BTB domain. Positions 235 to 300 (FEEPDLTQRC…NWAEVECQRQ (66 aa)) constitute a BACK domain.

It localises to the cytoplasm. The protein localises to the cytosol. Its subcellular location is the nucleus. Acts as a key regulator of dendritic field orientation during development of sensory cortex. Also directs dendrites toward active axon terminals when ectopically expressed. The chain is BTB/POZ domain-containing protein 3 (BTBD3) from Homo sapiens (Human).